A 360-amino-acid polypeptide reads, in one-letter code: 3-isopropylmalate dehydrogenase (360 aa).

76–89 (GPKWEPLDYSLRPE) provides a ligand contact to NAD(+). Positions 96, 106, 134, and 224 each coordinate substrate. Mg(2+)-binding residues include aspartate 224, aspartate 248, and aspartate 252. Residue 282–294 (GSAPDIAGRGIAN) coordinates NAD(+).

This sequence belongs to the isocitrate and isopropylmalate dehydrogenases family. LeuB type 1 subfamily. Homodimer. The cofactor is Mg(2+). It depends on Mn(2+) as a cofactor.

Its subcellular location is the cytoplasm. The catalysed reaction is (2R,3S)-3-isopropylmalate + NAD(+) = 4-methyl-2-oxopentanoate + CO2 + NADH. It functions in the pathway amino-acid biosynthesis; L-leucine biosynthesis; L-leucine from 3-methyl-2-oxobutanoate: step 3/4. Functionally, catalyzes the oxidation of 3-carboxy-2-hydroxy-4-methylpentanoate (3-isopropylmalate) to 3-carboxy-4-methyl-2-oxopentanoate. The product decarboxylates to 4-methyl-2 oxopentanoate. This chain is 3-isopropylmalate dehydrogenase, found in Methylococcus capsulatus (strain ATCC 33009 / NCIMB 11132 / Bath).